The primary structure comprises 315 residues: MLKVKSDFLTKDQVIYDVAIVGAGPAGIAAGIYGKRANLNLAIIEGSTPGGKVVKTNIVENYPGYKSITGPDLGLEMYNHLIDLEPTFFYANLIKLDKAADTFILYLDDKTVVFAKTVIYATGMLERKLGVAKEDHFYGKGISYCAICDGSLYKDQVVGVVGGGNSAIQEALYLASMAKTVHLIHRREGFRADETALNKLRNLPNVVFHLNYTVKELLGNNTLNGIVLQNTLDHSTKQIDLNCVFPYIGFESITKPVEHLNLKLDPQGFLITNEQMETSLKGLFAAGDCRSKHFRQIGTAINDGIIAVLTIRDVL.

Position 45-52 (45-52 (EGSTPGGK)) interacts with FAD. A disulfide bond links C145 and C148. Position 288–297 (288–297 (DCRSKHFRQI)) interacts with FAD.

The protein belongs to the class-II pyridine nucleotide-disulfide oxidoreductase family. In terms of assembly, homodimer. It depends on FAD as a cofactor.

The protein localises to the cytoplasm. The catalysed reaction is [thioredoxin]-dithiol + NADP(+) = [thioredoxin]-disulfide + NADPH + H(+). This is Thioredoxin reductase (trxB) from Mycoplasma pneumoniae (strain ATCC 29342 / M129 / Subtype 1) (Mycoplasmoides pneumoniae).